Reading from the N-terminus, the 522-residue chain is Leucine-rich repeat transmembrane neuronal protein 1 (522 aa).

An N-terminal signal peptide occupies residues 1–34 (MDFLLLGLCLHWLLRRPSGVVLCLLGACFQMLPA). The 29-residue stretch at 35 to 63 (APSGCPGQCRCEGRLLYCEALNLTEAPHN) folds into the LRRNT domain. Over 35–427 (APSGCPGQCR…HAENAVQIHK (393 aa)) the chain is Extracellular. Asparagine 56 and asparagine 63 each carry an N-linked (GlcNAc...) asparagine glycan. LRR repeat units follow at residues 64-87 (LSGLLGLSLRYNSLSELRAGQFTG), 89-111 (MQLTWLYLDHNHICSVQGDAFQK), 112-135 (LRRVKELTLSSNQITELANTTFRP), 136-159 (MPNLRSVDLSYNKLQALAPDLFHG), 161-183 (RKLTTLHMRANAIQFVPVRIFQD), 184-207 (CRSLKFLDIGYNQLKSLARNSFAG), 209-231 (FKLTELHLEHNDLIKVNFAHFPR), 233-255 (ISLHSLCLRRNKVAIVVSSLDWV), 256-278 (WNLEKMDLSGNEIEYMEPHVFET), and 280-302 (PYLQTLQLDSNRLTYIEPRILNS). Asparagine 130 carries an N-linked (GlcNAc...) asparagine glycan. An LRRCT domain is found at 314–365 (NLWDCGRNVCALASWLSNFQGRYDANLQCASPEYAQGEDVLDAVYAFHLCED). Asparagine 381 carries N-linked (GlcNAc...) asparagine glycosylation. Residues 428-448 (VVTGTMALIFSFLIVVLVLYV) traverse the membrane as a helical segment. At 449–522 (SWKCFPASLR…HQQPARECEV (74 aa)) the chain is on the cytoplasmic side.

The protein belongs to the LRRTM family. In terms of tissue distribution, expressed predominantly in the nervous system by postmitotic neurons, but also in some non-neuronal tissues. In adult brain expression is most prominent in the forebraain, particularly in the thalamus and in the cortical areas including hippocampus, piriform and posterior cingulate.

The protein resides in the cell membrane. The protein localises to the postsynaptic cell membrane. In terms of biological role, exhibits strong synaptogenic activity, restricted to excitatory presynaptic differentiation, acting at both pre- and postsynaptic level. In Mus musculus (Mouse), this protein is Leucine-rich repeat transmembrane neuronal protein 1 (Lrrtm1).